The primary structure comprises 377 residues: Anhydro-N-acetylmuramic acid kinase (377 aa).

ATP is bound at residue 18–25; it reads GTSADGID.

Belongs to the anhydro-N-acetylmuramic acid kinase family.

It carries out the reaction 1,6-anhydro-N-acetyl-beta-muramate + ATP + H2O = N-acetyl-D-muramate 6-phosphate + ADP + H(+). Its pathway is amino-sugar metabolism; 1,6-anhydro-N-acetylmuramate degradation. It participates in cell wall biogenesis; peptidoglycan recycling. Functionally, catalyzes the specific phosphorylation of 1,6-anhydro-N-acetylmuramic acid (anhMurNAc) with the simultaneous cleavage of the 1,6-anhydro ring, generating MurNAc-6-P. Is required for the utilization of anhMurNAc either imported from the medium or derived from its own cell wall murein, and thus plays a role in cell wall recycling. The protein is Anhydro-N-acetylmuramic acid kinase of Xanthomonas campestris pv. campestris (strain 8004).